A 248-amino-acid polypeptide reads, in one-letter code: 3-deoxy-manno-octulosonate cytidylyltransferase (248 aa).

Belongs to the KdsB family.

The protein localises to the cytoplasm. It carries out the reaction 3-deoxy-alpha-D-manno-oct-2-ulosonate + CTP = CMP-3-deoxy-beta-D-manno-octulosonate + diphosphate. It participates in nucleotide-sugar biosynthesis; CMP-3-deoxy-D-manno-octulosonate biosynthesis; CMP-3-deoxy-D-manno-octulosonate from 3-deoxy-D-manno-octulosonate and CTP: step 1/1. Its pathway is bacterial outer membrane biogenesis; lipopolysaccharide biosynthesis. In terms of biological role, activates KDO (a required 8-carbon sugar) for incorporation into bacterial lipopolysaccharide in Gram-negative bacteria. The chain is 3-deoxy-manno-octulosonate cytidylyltransferase from Salmonella dublin (strain CT_02021853).